We begin with the raw amino-acid sequence, 207 residues long: Coiled-coil domain-containing protein 124 homolog (207 aa).

The disordered stretch occupies residues 1–90 (MGNPKKRAEK…KAAKKNSSLD (90 aa)). A coiled-coil region spans residues 5–71 (KKRAEKAEAA…RLEKEEMESL (67 aa)). 2 stretches are compositionally biased toward basic and acidic residues: residues 9 to 28 (EKAE…KKDA) and 41 to 65 (NKKE…RLEK).

Belongs to the CCDC124 family. In terms of assembly, associates with translationally inactive ribosomes in the nonrotated state.

The protein localises to the cytoplasm. It localises to the nucleus. Ribosome-binding protein involved in ribosome hibernation by associating with translationally inactive ribosomes. Required for translational recovery after starvation from stationary phase. May facilitate rapid translation reactivation by stabilizing the recycling-competent state of inactive ribosomes. The protein is Coiled-coil domain-containing protein 124 homolog of Schizosaccharomyces pombe (strain 972 / ATCC 24843) (Fission yeast).